The chain runs to 445 residues: Phosphoglucosamine mutase (445 aa).

S101 serves as the catalytic Phosphoserine intermediate. Mg(2+)-binding residues include S101, D240, D242, and D244. At S101 the chain carries Phosphoserine.

Belongs to the phosphohexose mutase family. Requires Mg(2+) as cofactor. In terms of processing, activated by phosphorylation.

The enzyme catalyses alpha-D-glucosamine 1-phosphate = D-glucosamine 6-phosphate. Its function is as follows. Catalyzes the conversion of glucosamine-6-phosphate to glucosamine-1-phosphate. This Pseudomonas paraeruginosa (strain DSM 24068 / PA7) (Pseudomonas aeruginosa (strain PA7)) protein is Phosphoglucosamine mutase.